The following is an 87-amino-acid chain: Small ribosomal subunit protein bS20 (87 aa).

The disordered stretch occupies residues 1–29 (MANTAQARKRARQAVKQNAHNSSQRSTLR). Residues 20-29 (HNSSQRSTLR) are compositionally biased toward polar residues.

It belongs to the bacterial ribosomal protein bS20 family.

Binds directly to 16S ribosomal RNA. This Janthinobacterium sp. (strain Marseille) (Minibacterium massiliensis) protein is Small ribosomal subunit protein bS20.